The chain runs to 158 residues: SsrA-binding protein (158 aa).

Residues 132–158 (KKTHDKRETEKKRDWNREKARLMRDKG) form a disordered region. Basic and acidic residues predominate over residues 136–158 (DKRETEKKRDWNREKARLMRDKG).

The protein belongs to the SmpB family.

It localises to the cytoplasm. In terms of biological role, required for rescue of stalled ribosomes mediated by trans-translation. Binds to transfer-messenger RNA (tmRNA), required for stable association of tmRNA with ribosomes. tmRNA and SmpB together mimic tRNA shape, replacing the anticodon stem-loop with SmpB. tmRNA is encoded by the ssrA gene; the 2 termini fold to resemble tRNA(Ala) and it encodes a 'tag peptide', a short internal open reading frame. During trans-translation Ala-aminoacylated tmRNA acts like a tRNA, entering the A-site of stalled ribosomes, displacing the stalled mRNA. The ribosome then switches to translate the ORF on the tmRNA; the nascent peptide is terminated with the 'tag peptide' encoded by the tmRNA and targeted for degradation. The ribosome is freed to recommence translation, which seems to be the essential function of trans-translation. This is SsrA-binding protein from Brucella anthropi (strain ATCC 49188 / DSM 6882 / CCUG 24695 / JCM 21032 / LMG 3331 / NBRC 15819 / NCTC 12168 / Alc 37) (Ochrobactrum anthropi).